The following is an 849-amino-acid chain: MMEPPKPEPELQRFYHRLLRPLSLFPTRTTSPEPQKRPPQEGRILQSFPLAKLTVASLCSQVAKLLAGSGIAAGVPPEARLRLIKVILDELKCSWREPPAELSLSHKNNQKLRKRLEAYVLLSSEQLFLRYLHLLVTMSTPRGVFTESATLTRLAASLARDCTLFLTSPNVYRGLLADFQALLRAEQASGDVDKLHPVCPAGTFKLCPIPWPHSTGFAQVQCSNLNLNYLIQLSRPPEFLNEPGRMDPVKELKSIPRLKRKKPFHWLPSIGKKREIDISSSQMVSLPSYPVAPTSRASPSPFCPELRRGQSMPSLREGWRLADELGLPPLPSRPLTPLVLATESKPELTGLIVAEDLKQLIKKMKLEGTRYPPLDSGLPPLLGVVTRHPAAGHRLEELEKMLRNLQEEEASGQWDPQPPKSFPLHPQPVTITLKLRNEVVVQAAAVRVSDRNFLDSFHIEGAGALYNHLAGELDPKAIEKMDIDNFVGSTTREVYKELMSHVSSDHLHFDQGPLVEPAADKDWSTFLSSAFLRQEKQPQIINPELVGLYSQRANTLQSNTKKMPSLPSLQATKSWEKWSNKASLMNSWKTTLSVDDYFKYLTNHETDFLHVIFQMHEEEVPVEIVAPARESLEIQHPPPLLEDEEPDFVPGEWDWNTVLEHRLGAGKTPHLGEPHKILSLQKHLEQLWSVLEVPDKDQVDMTIKYSSKARLRQLPSLVNAWERALKPIQLREALLARLEWFEGQASNPNRFFKKTNLSSSHFLEENQVRSHLHRKLNLMESSLVSLLEEIELIFGEPVIFKGRPYLDKMKSDKVEMLYWLQQQRRVRHLVSALKDPHQSTLFRSSAASL.

Residues 387-415 (RHPAAGHRLEELEKMLRNLQEEEASGQWD) are a coiled coil.

The protein belongs to the CCDC87 family.

Plays a role in spermatogenesis, where it is important for normal sperm head morphology. Also required for the acrosome reaction and thus normal male fertility. This chain is Coiled-coil domain-containing protein 87 (CCDC87), found in Homo sapiens (Human).